A 489-amino-acid chain; its full sequence is Glutamyl-tRNA(Gln) amidotransferase subunit A (489 aa).

Residues K75 and S150 each act as charge relay system in the active site. The active-site Acyl-ester intermediate is S174.

The protein belongs to the amidase family. GatA subfamily. In terms of assembly, heterotrimer of A, B and C subunits.

It catalyses the reaction L-glutamyl-tRNA(Gln) + L-glutamine + ATP + H2O = L-glutaminyl-tRNA(Gln) + L-glutamate + ADP + phosphate + H(+). Its function is as follows. Allows the formation of correctly charged Gln-tRNA(Gln) through the transamidation of misacylated Glu-tRNA(Gln) in organisms which lack glutaminyl-tRNA synthetase. The reaction takes place in the presence of glutamine and ATP through an activated gamma-phospho-Glu-tRNA(Gln). In Gloeobacter violaceus (strain ATCC 29082 / PCC 7421), this protein is Glutamyl-tRNA(Gln) amidotransferase subunit A.